The primary structure comprises 302 residues: Sulfate adenylyltransferase subunit 2 (302 aa).

Residues 279–302 are disordered; sequence ERQGRAIDHDQSGSMELKKRQGYF. Basic and acidic residues predominate over residues 280–302; it reads RQGRAIDHDQSGSMELKKRQGYF.

Belongs to the PAPS reductase family. CysD subfamily. In terms of assembly, heterodimer composed of CysD, the smaller subunit, and CysN.

The catalysed reaction is sulfate + ATP + H(+) = adenosine 5'-phosphosulfate + diphosphate. It participates in sulfur metabolism; hydrogen sulfide biosynthesis; sulfite from sulfate: step 1/3. Functionally, with CysN forms the ATP sulfurylase (ATPS) that catalyzes the adenylation of sulfate producing adenosine 5'-phosphosulfate (APS) and diphosphate, the first enzymatic step in sulfur assimilation pathway. APS synthesis involves the formation of a high-energy phosphoric-sulfuric acid anhydride bond driven by GTP hydrolysis by CysN coupled to ATP hydrolysis by CysD. The sequence is that of Sulfate adenylyltransferase subunit 2 from Photobacterium profundum (strain SS9).